A 1343-amino-acid chain; its full sequence is Kinesin-like protein KIF7 (1343 aa).

The Kinesin motor domain occupies 15 to 349; the sequence is PVRVALRVRP…LNYASRAQNI (335 aa). An ATP-binding site is contributed by 94 to 101; the sequence is GQTGSGKT. Disordered stretches follow at residues 356–382, 451–483, and 611–639; these read NWRP…RSET, RSAL…RKED, and EVNR…TLHL. Positions 358–479 are interaction with DLG5; it reads RPEAERPPEE…EDQAAQGAGG (122 aa). An interaction with SMO region spans residues 358–1206; the sequence is RPEAERPPEE…LGRYMWINQE (849 aa). A coiled-coil region spans residues 480 to 542; it reads RKEDEGAQQL…ELRLRLELVR (63 aa). A sufficient for interaction with NPHP1 region spans residues 513-775; that stretch reads AMEQYKLQSD…LRELEGKELQ (263 aa). Coiled coils occupy residues 698-1057 and 1109-1211; these read ASEW…AAIE and TLRE…KQKL. S898 is subject to Phosphoserine. 2 disordered regions span residues 1219 to 1238 and 1310 to 1343; these read HSRG…APGN and GEAG…KNPL.

This sequence belongs to the TRAFAC class myosin-kinesin ATPase superfamily. Kinesin family. KIF27 subfamily. As to quaternary structure, can form homodimers and interacts with microtubules. Interacts with GLI1, GLI2, GLI3, SMO and SUFU. Interacts with NPHP1. Interacts with SMO and DLG5 (via PDZ4 or guanylate kinase-like domain). In terms of processing, polyubiquitinated by UBR3. In terms of tissue distribution, embryonic stem cells, melanotic melanoma and Jurkat T-cells. Expressed in heart, lung, liver, kidney, testis, retina, placenta, pancreas, colon, small intestin, prostate and thymus.

It is found in the cell projection. It localises to the cilium. The protein localises to the cytoplasm. Its subcellular location is the cytoskeleton. The protein resides in the cilium basal body. Functionally, essential for hedgehog signaling regulation: acts both as a negative and positive regulator of sonic hedgehog (Shh) and Indian hedgehog (Ihh) pathways, acting downstream of SMO, through both SUFU-dependent and -independent mechanisms. Involved in the regulation of microtubular dynamics. Required for proper organization of the ciliary tip and control of ciliary localization of SUFU-GLI2 complexes. Required for localization of GLI3 to cilia in response to Shh. Negatively regulates Shh signaling by preventing inappropriate activation of the transcriptional activator GLI2 in the absence of ligand. Positively regulates Shh signaling by preventing the processing of the transcription factor GLI3 into its repressor form. In keratinocytes, promotes the dissociation of SUFU-GLI2 complexes, GLI2 nuclear translocation and Shh signaling activation. Involved in the regulation of epidermal differentiation and chondrocyte development. The protein is Kinesin-like protein KIF7 (KIF7) of Homo sapiens (Human).